The primary structure comprises 536 residues: Lysosomal acid glucosylceramidase (536 aa).

A signal peptide spans 1-39 (MEFSSPSREECPKPSGRVNIMAGSLTGLLLLQAVSWASG). Intrachain disulfides connect Cys43–Cys55 and Cys57–Cys62. N-linked (GlcNAc...) asparagine glycosylation is found at Asn58, Asn98, and Asn185. The Proton donor role is filled by Glu274. Asn309 carries N-linked (GlcNAc...) asparagine glycosylation. Glu379 serves as the catalytic Nucleophile. A glycan (N-linked (GlcNAc...) asparagine) is linked at Asn501.

This sequence belongs to the glycosyl hydrolase 30 family. Interacts with saposin-C. Interacts with SCARB2. Interacts with TCP1. Interacts with GRN; this interaction prevents aggregation of GBA1-SCARB2 complex via interaction with HSPA1A upon stress.

It localises to the lysosome membrane. The catalysed reaction is a beta-D-glucosyl-(1&lt;-&gt;1')-N-acylsphing-4-enine + H2O = an N-acylsphing-4-enine + D-glucose. It catalyses the reaction a beta-D-galactosyl-(1&lt;-&gt;1')-N-acylsphing-4-enine + H2O = an N-acylsphing-4-enine + D-galactose. It carries out the reaction cholesteryl 3-beta-D-glucoside + H2O = cholesterol + D-glucose. The enzyme catalyses a beta-D-glucosyl-(1&lt;-&gt;1')-N-acylsphing-4-enine + cholesterol = cholesteryl 3-beta-D-glucoside + an N-acylsphing-4-enine. The catalysed reaction is beta-D-glucosyl-N-(9Z-octadecenoyl)-sphing-4E-enine + cholesterol = N-(9Z-octadecenoyl)-sphing-4-enine + cholesteryl 3-beta-D-glucoside. It catalyses the reaction beta-D-glucosyl-N-octanoylsphing-4E-enine + cholesterol = N-octanoylsphing-4-enine + cholesteryl 3-beta-D-glucoside. It carries out the reaction beta-D-glucosyl-N-dodecanoylsphing-4-enine + cholesterol = N-dodecanoylsphing-4-enine + cholesteryl 3-beta-D-glucoside. The enzyme catalyses beta-D-glucosyl-(1&lt;-&gt;1)-N-octadecanoylsphing-4-enine + cholesterol = N-octadecanoylsphing-4-enine + cholesteryl 3-beta-D-glucoside. The catalysed reaction is beta-D-glucosyl-(1&lt;-&gt;1')-N-(15Z-tetracosenoyl)-sphing-4-enine + cholesterol = N-(15Z-tetracosenoyl)-sphing-4-enine + cholesteryl 3-beta-D-glucoside. It catalyses the reaction a beta-D-galactosyl-(1&lt;-&gt;1')-N-acylsphing-4-enine + cholesterol = cholesteryl 3-beta-D-galactoside + an N-acylsphing-4-enine. It carries out the reaction 1-(beta-D-galactosyl)-N-dodecanoylsphing-4-enine + cholesterol = cholesteryl 3-beta-D-galactoside + N-dodecanoylsphing-4-enine. The enzyme catalyses a beta-D-xylosyl-(1&lt;-&gt;1')-N-acylsphing-4-enine + cholesterol = cholesteryl 3-beta-D-xyloside + an N-acylsphing-4-enine. The catalysed reaction is beta-D-xylosyl-(1&lt;-&gt;1')-N-(9Z-octadecenoyl)-sphing-4-enine + cholesterol = cholesteryl 3-beta-D-xyloside + N-(9Z-octadecenoyl)-sphing-4-enine. It participates in steroid metabolism; cholesterol metabolism. The protein operates within sphingolipid metabolism. Glucosylceramidase that catalyzes, within the lysosomal compartment, the hydrolysis of glucosylceramides/GlcCers (such as beta-D-glucosyl-(1&lt;-&gt;1')-N-acylsphing-4-enine) into free ceramides (such as N-acylsphing-4-enine) and glucose. Plays a central role in the degradation of complex lipids and the turnover of cellular membranes. Through the production of ceramides, participates in the PKC-activated salvage pathway of ceramide formation. Catalyzes the glucosylation of cholesterol, through a transglucosylation reaction where glucose is transferred from GlcCer to cholesterol. GlcCer containing mono-unsaturated fatty acids (such as beta-D-glucosyl-N-(9Z-octadecenoyl)-sphing-4-enine) are preferred as glucose donors for cholesterol glucosylation when compared with GlcCer containing same chain length of saturated fatty acids (such as beta-D-glucosyl-N-octadecanoyl-sphing-4-enine). Under specific conditions, may alternatively catalyze the reverse reaction, transferring glucose from cholesteryl 3-beta-D-glucoside to ceramide. Can also hydrolyze cholesteryl 3-beta-D-glucoside producing glucose and cholesterol. Catalyzes the hydrolysis of galactosylceramides/GalCers (such as beta-D-galactosyl-(1&lt;-&gt;1')-N-acylsphing-4-enine), as well as the transfer of galactose between GalCers and cholesterol in vitro, but with lower activity than with GlcCers. Contrary to GlcCer and GalCer, xylosylceramide/XylCer (such as beta-D-xyosyl-(1&lt;-&gt;1')-N-acylsphing-4-enine) is not a good substrate for hydrolysis, however it is a good xylose donor for transxylosylation activity to form cholesteryl 3-beta-D-xyloside. The chain is Lysosomal acid glucosylceramidase (GBA1) from Pongo abelii (Sumatran orangutan).